Here is a 188-residue protein sequence, read N- to C-terminus: Elongation factor P (188 aa).

Lysine 34 carries the post-translational modification N6-(3,6-diaminohexanoyl)-5-hydroxylysine.

This sequence belongs to the elongation factor P family. Post-translationally, may be beta-lysylated on the epsilon-amino group of Lys-34 by the combined action of EpmA and EpmB, and then hydroxylated on the C5 position of the same residue by EpmC (if this protein is present). Lysylation is critical for the stimulatory effect of EF-P on peptide-bond formation. The lysylation moiety may extend toward the peptidyltransferase center and stabilize the terminal 3-CCA end of the tRNA. Hydroxylation of the C5 position on Lys-34 may allow additional potential stabilizing hydrogen-bond interactions with the P-tRNA.

It localises to the cytoplasm. The protein operates within protein biosynthesis; polypeptide chain elongation. Its function is as follows. Involved in peptide bond synthesis. Alleviates ribosome stalling that occurs when 3 or more consecutive Pro residues or the sequence PPG is present in a protein, possibly by augmenting the peptidyl transferase activity of the ribosome. Modification of Lys-34 is required for alleviation. The sequence is that of Elongation factor P from Serratia proteamaculans (strain 568).